We begin with the raw amino-acid sequence, 804 residues long: Exocyst complex component 6 (804 aa).

The protein belongs to the SEC15 family. As to quaternary structure, the exocyst complex is composed of EXOC1, EXOC2, EXOC3, EXOC4, EXOC5, EXOC6, EXOC7 and EXOC8. Interacts with CNTRL. Interacts with RAB11A in a GTP-dependent manner.

It is found in the cytoplasm. The protein localises to the perinuclear region. It localises to the cell projection. Its subcellular location is the growth cone. The protein resides in the midbody. It is found in the midbody ring. Functionally, component of the exocyst complex involved in the docking of exocytic vesicles with fusion sites on the plasma membrane. Together with RAB11A, RAB3IP, RAB8A, PARD3, PRKCI, ANXA2, CDC42 and DNMBP promotes transcytosis of PODXL to the apical membrane initiation sites (AMIS), apical surface formation and lumenogenesis. This Rattus norvegicus (Rat) protein is Exocyst complex component 6 (Exoc6).